Reading from the N-terminus, the 1486-residue chain is Protein PRRC2B (1486 aa).

Disordered regions lie at residues Met1–Thr20, Val39–Pro306, Gln320–Gln341, Lys385–Glu519, and Leu531–Tyr658. Polar residues predominate over residues Ala88–Val137. A phosphoserine mark is found at Ser166, Ser168, Ser222, and Ser226. Residues Ser219–Ala235 show a composition bias toward polar residues. Thr228 carries the phosphothreonine modification. Lys251 is covalently cross-linked (Glycyl lysine isopeptide (Lys-Gly) (interchain with G-Cter in SUMO2)). Positions Ser288–Arg300 are enriched in polar residues. A phosphoserine mark is found at Ser387 and Ser415. Composition is skewed to basic and acidic residues over residues Thr422–Asp433, His478–Pro488, and Ala501–Glu519. The residue at position 479 (Ser479) is a Phosphoserine. Residues Ile494–Thr544 are a coiled coil. Ser555 carries the post-translational modification Phosphoserine. Low complexity predominate over residues Ser600–Ser611. Ser621 carries the phosphoserine modification. Residues Gln638 to Gln656 are compositionally biased toward low complexity. Lys751 participates in a covalent cross-link: Glycyl lysine isopeptide (Lys-Gly) (interchain with G-Cter in SUMO2). A Phosphothreonine modification is found at Thr753. A phosphoserine mark is found at Ser762 and Ser793. Disordered regions lie at residues Arg792–Lys847, Glu893–Arg918, and Ala950–Val1080. The stretch at Ile880 to Val904 forms a coiled coil. Residues Ser960–Asp986 are compositionally biased toward polar residues. Over residues Ser998–Ser1007 the composition is skewed to low complexity. 2 stretches are compositionally biased toward basic and acidic residues: residues Ser1025 to Pro1055 and Arg1062 to Glu1074. Phosphoserine is present on residues Ser1070 and Ser1159. Disordered regions lie at residues Lys1177–Gly1205, Gln1410–Glu1443, and Ala1455–Pro1486. The segment covering Asn1181 to Pro1191 has biased composition (polar residues). Positions Gln1410–Ser1421 are enriched in low complexity. The span at Ser1457 to Arg1474 shows a compositional bias: polar residues.

This Mus musculus (Mouse) protein is Protein PRRC2B (Prrc2b).